The sequence spans 150 residues: D-aminoacyl-tRNA deacylase (150 aa).

A Gly-cisPro motif, important for rejection of L-amino acids motif is present at residues 136 to 137 (GP).

The protein belongs to the DTD family. In terms of assembly, homodimer.

The protein resides in the cytoplasm. It carries out the reaction glycyl-tRNA(Ala) + H2O = tRNA(Ala) + glycine + H(+). It catalyses the reaction a D-aminoacyl-tRNA + H2O = a tRNA + a D-alpha-amino acid + H(+). In terms of biological role, an aminoacyl-tRNA editing enzyme that deacylates mischarged D-aminoacyl-tRNAs. Also deacylates mischarged glycyl-tRNA(Ala), protecting cells against glycine mischarging by AlaRS. Acts via tRNA-based rather than protein-based catalysis; rejects L-amino acids rather than detecting D-amino acids in the active site. By recycling D-aminoacyl-tRNA to D-amino acids and free tRNA molecules, this enzyme counteracts the toxicity associated with the formation of D-aminoacyl-tRNA entities in vivo and helps enforce protein L-homochirality. The protein is D-aminoacyl-tRNA deacylase of Staphylococcus aureus (strain bovine RF122 / ET3-1).